The chain runs to 430 residues: Ribosomal protein uS12 methylthiotransferase RimO (430 aa).

One can recognise an MTTase N-terminal domain in the interval 1-116; sequence MRVGIKVLGC…IANAIENGTD (116 aa). Cysteine 10, cysteine 46, cysteine 79, cysteine 148, cysteine 152, and cysteine 155 together coordinate [4Fe-4S] cluster. The Radical SAM core domain maps to 134–365; that stretch reads LEERPYAYVK…LLQAEISNSR (232 aa). A TRAM domain is found at 367–430; the sequence is DRFVGKKLKF…DEYDMWGSVI (64 aa).

The protein belongs to the methylthiotransferase family. RimO subfamily. Requires [4Fe-4S] cluster as cofactor.

It localises to the cytoplasm. The enzyme catalyses L-aspartate(89)-[ribosomal protein uS12]-hydrogen + (sulfur carrier)-SH + AH2 + 2 S-adenosyl-L-methionine = 3-methylsulfanyl-L-aspartate(89)-[ribosomal protein uS12]-hydrogen + (sulfur carrier)-H + 5'-deoxyadenosine + L-methionine + A + S-adenosyl-L-homocysteine + 2 H(+). In terms of biological role, catalyzes the methylthiolation of an aspartic acid residue of ribosomal protein uS12. This is Ribosomal protein uS12 methylthiotransferase RimO from Thermotoga petrophila (strain ATCC BAA-488 / DSM 13995 / JCM 10881 / RKU-1).